The following is a 269-amino-acid chain: 4-hydroxy-tetrahydrodipicolinate reductase (269 aa).

Residues 8–13 (GAAGRM) and glutamate 34 each bind NAD(+). Arginine 35 contacts NADP(+). Residues 98 to 100 (GTT) and 122 to 125 (APNY) each bind NAD(+). The Proton donor/acceptor role is filled by histidine 155. A (S)-2,3,4,5-tetrahydrodipicolinate-binding site is contributed by histidine 156. The Proton donor role is filled by lysine 159. (S)-2,3,4,5-tetrahydrodipicolinate is bound at residue 165–166 (GT).

The protein belongs to the DapB family.

The protein localises to the cytoplasm. It catalyses the reaction (S)-2,3,4,5-tetrahydrodipicolinate + NAD(+) + H2O = (2S,4S)-4-hydroxy-2,3,4,5-tetrahydrodipicolinate + NADH + H(+). The catalysed reaction is (S)-2,3,4,5-tetrahydrodipicolinate + NADP(+) + H2O = (2S,4S)-4-hydroxy-2,3,4,5-tetrahydrodipicolinate + NADPH + H(+). Its pathway is amino-acid biosynthesis; L-lysine biosynthesis via DAP pathway; (S)-tetrahydrodipicolinate from L-aspartate: step 4/4. In terms of biological role, catalyzes the conversion of 4-hydroxy-tetrahydrodipicolinate (HTPA) to tetrahydrodipicolinate. This Vibrio cholerae serotype O1 (strain ATCC 39315 / El Tor Inaba N16961) protein is 4-hydroxy-tetrahydrodipicolinate reductase.